We begin with the raw amino-acid sequence, 104 residues long: Enhancer of rudimentary homolog (104 aa).

N-acetylserine is present on S2. A Phosphothreonine modification is found at T11. K12 participates in a covalent cross-link: Glycyl lysine isopeptide (Lys-Gly) (interchain with G-Cter in SUMO2).

It belongs to the E(R) family. Homodimer.

The protein resides in the nucleus. Functionally, may have a role in the cell cycle. In Bos taurus (Bovine), this protein is Enhancer of rudimentary homolog (ERH).